The sequence spans 298 residues: Lipoyl synthase (298 aa).

The [4Fe-4S] cluster site is built by Cys-40, Cys-45, Cys-51, Cys-67, Cys-71, Cys-74, and Ser-280. Residues 53-269 (AVRKTATFMI…KEIALSKGFS (217 aa)) form the Radical SAM core domain.

The protein belongs to the radical SAM superfamily. Lipoyl synthase family. [4Fe-4S] cluster serves as cofactor.

The protein localises to the cytoplasm. The catalysed reaction is [[Fe-S] cluster scaffold protein carrying a second [4Fe-4S](2+) cluster] + N(6)-octanoyl-L-lysyl-[protein] + 2 oxidized [2Fe-2S]-[ferredoxin] + 2 S-adenosyl-L-methionine + 4 H(+) = [[Fe-S] cluster scaffold protein] + N(6)-[(R)-dihydrolipoyl]-L-lysyl-[protein] + 4 Fe(3+) + 2 hydrogen sulfide + 2 5'-deoxyadenosine + 2 L-methionine + 2 reduced [2Fe-2S]-[ferredoxin]. Its pathway is protein modification; protein lipoylation via endogenous pathway; protein N(6)-(lipoyl)lysine from octanoyl-[acyl-carrier-protein]. In terms of biological role, catalyzes the radical-mediated insertion of two sulfur atoms into the C-6 and C-8 positions of the octanoyl moiety bound to the lipoyl domains of lipoate-dependent enzymes, thereby converting the octanoylated domains into lipoylated derivatives. This chain is Lipoyl synthase, found in Bacillus cereus (strain G9842).